Consider the following 167-residue polypeptide: 3-isopropylmalate dehydratase small subunit (167 aa).

It belongs to the LeuD family. LeuD type 2 subfamily. Heterodimer of LeuC and LeuD.

The enzyme catalyses (2R,3S)-3-isopropylmalate = (2S)-2-isopropylmalate. Its pathway is amino-acid biosynthesis; L-leucine biosynthesis; L-leucine from 3-methyl-2-oxobutanoate: step 2/4. Functionally, catalyzes the isomerization between 2-isopropylmalate and 3-isopropylmalate, via the formation of 2-isopropylmaleate. The protein is 3-isopropylmalate dehydratase small subunit of Nitratidesulfovibrio vulgaris (strain ATCC 29579 / DSM 644 / CCUG 34227 / NCIMB 8303 / VKM B-1760 / Hildenborough) (Desulfovibrio vulgaris).